The chain runs to 512 residues: Cytochrome P450 26B1 (512 aa).

Cysteine 441 serves as a coordination point for heme.

This sequence belongs to the cytochrome P450 family. It depends on heme as a cofactor.

The protein localises to the endoplasmic reticulum membrane. The protein resides in the microsome membrane. The catalysed reaction is all-trans-retinoate + reduced [NADPH--hemoprotein reductase] + O2 = all-trans-4-hydroxyretinoate + oxidized [NADPH--hemoprotein reductase] + H2O + H(+). The enzyme catalyses all-trans-retinoate + reduced [NADPH--hemoprotein reductase] + O2 = all-trans-18-hydroxyretinoate + oxidized [NADPH--hemoprotein reductase] + H2O + H(+). Its function is as follows. A cytochrome P450 monooxygenase involved in the metabolism of retinoates (RAs), the active metabolites of vitamin A, and critical signaling molecules in animals. RAs exist as at least four different isomers: all-trans-RA (atRA), 9-cis-RA, 13-cis-RA, and 9,13-dicis-RA, where atRA is considered to be the biologically active isomer, although 9-cis-RA and 13-cis-RA also have activity. Catalyzes the hydroxylation of atRA primarily at C-4 and C-18, thereby contributing to the regulation of atRA homeostasis and signaling. Hydroxylation of atRA limits its biological activity and initiates a degradative process leading to its eventual elimination. Involved in the convertion of atRA to all-trans-4-oxo-RA. Can oxidize all-trans-13,14-dihydroretinoate (DRA) to metabolites which could include all-trans-4-oxo-DRA, all-trans-4-hydroxy-DRA, all-trans-5,8-epoxy-DRA, and all-trans-18-hydroxy-DRA. Shows preference for the following substrates: atRA &gt; 9-cis-RA &gt; 13-cis-RA. Plays a central role in germ cell development: acts by degrading RAs in the developing testis, preventing STRA8 expression, thereby leading to delay of meiosis. Required for the maintenance of the undifferentiated state of male germ cells during embryonic development in Sertoli cells, inducing arrest in G0 phase of the cell cycle and preventing meiotic entry. Plays a role in skeletal development, both at the level of patterning and in the ossification of bone and the establishment of some synovial joints. Essential for postnatal survival. Also has a significant activity in oxidation of tazarotenic acid and may therefore metabolize that xenobiotic in vivo. This Mus musculus (Mouse) protein is Cytochrome P450 26B1 (Cyp26b1).